The following is a 461-amino-acid chain: Anthranilate synthase component 1 (461 aa).

L-tryptophan is bound by residues Ser-43 and 238–240; that span reads PYM. A chorismate-binding site is contributed by 273–274; that stretch reads GT. Glu-300 lines the Mg(2+) pocket. Chorismate-binding positions include Tyr-388, Arg-408, 422–424, and Gly-424; that span reads GAG. Mg(2+) is bound at residue Glu-437.

It belongs to the anthranilate synthase component I family. As to quaternary structure, heterotetramer consisting of two non-identical subunits: a beta subunit (TrpG) and a large alpha subunit (TrpE). Requires Mg(2+) as cofactor.

It catalyses the reaction chorismate + L-glutamine = anthranilate + pyruvate + L-glutamate + H(+). It functions in the pathway amino-acid biosynthesis; L-tryptophan biosynthesis; L-tryptophan from chorismate: step 1/5. Feedback inhibited by tryptophan. In terms of biological role, part of a heterotetrameric complex that catalyzes the two-step biosynthesis of anthranilate, an intermediate in the biosynthesis of L-tryptophan. In the first step, the glutamine-binding beta subunit (TrpG) of anthranilate synthase (AS) provides the glutamine amidotransferase activity which generates ammonia as a substrate that, along with chorismate, is used in the second step, catalyzed by the large alpha subunit of AS (TrpE) to produce anthranilate. In the absence of TrpG, TrpE can synthesize anthranilate directly from chorismate and high concentrations of ammonia. The sequence is that of Anthranilate synthase component 1 (trpE) from Methanothermobacter marburgensis (strain ATCC BAA-927 / DSM 2133 / JCM 14651 / NBRC 100331 / OCM 82 / Marburg) (Methanobacterium thermoautotrophicum).